A 292-amino-acid polypeptide reads, in one-letter code: UDP-3-O-acyl-N-acetylglucosamine deacetylase (292 aa).

Residues H76, H232, and D236 each coordinate Zn(2+). The active-site Proton donor is H259.

It belongs to the LpxC family. Zn(2+) is required as a cofactor.

The catalysed reaction is a UDP-3-O-[(3R)-3-hydroxyacyl]-N-acetyl-alpha-D-glucosamine + H2O = a UDP-3-O-[(3R)-3-hydroxyacyl]-alpha-D-glucosamine + acetate. The protein operates within glycolipid biosynthesis; lipid IV(A) biosynthesis; lipid IV(A) from (3R)-3-hydroxytetradecanoyl-[acyl-carrier-protein] and UDP-N-acetyl-alpha-D-glucosamine: step 2/6. Its function is as follows. Catalyzes the hydrolysis of UDP-3-O-myristoyl-N-acetylglucosamine to form UDP-3-O-myristoylglucosamine and acetate, the committed step in lipid A biosynthesis. In Thermodesulfovibrio yellowstonii (strain ATCC 51303 / DSM 11347 / YP87), this protein is UDP-3-O-acyl-N-acetylglucosamine deacetylase.